The chain runs to 402 residues: NADH-quinone oxidoreductase subunit D (402 aa).

The protein belongs to the complex I 49 kDa subunit family. NDH-1 is composed of 14 different subunits. Subunits NuoB, C, D, E, F, and G constitute the peripheral sector of the complex.

It localises to the cell inner membrane. The enzyme catalyses a quinone + NADH + 5 H(+)(in) = a quinol + NAD(+) + 4 H(+)(out). Its function is as follows. NDH-1 shuttles electrons from NADH, via FMN and iron-sulfur (Fe-S) centers, to quinones in the respiratory chain. The immediate electron acceptor for the enzyme in this species is believed to be ubiquinone. Couples the redox reaction to proton translocation (for every two electrons transferred, four hydrogen ions are translocated across the cytoplasmic membrane), and thus conserves the redox energy in a proton gradient. The polypeptide is NADH-quinone oxidoreductase subunit D (Cereibacter sphaeroides (strain ATCC 17025 / ATH 2.4.3) (Rhodobacter sphaeroides)).